The sequence spans 83 residues: Short neurotoxin II (83 aa).

The first 21 residues, 1–21 (MKTLLLTLVVVTVVCLDLGYT), serve as a signal peptide directing secretion. 4 disulfides stabilise this stretch: C24–C45, C38–C62, C64–C75, and C76–C81.

This sequence belongs to the three-finger toxin family. Short-chain subfamily. Type I alpha-neurotoxin sub-subfamily. Expressed by the venom gland.

Its subcellular location is the secreted. Its function is as follows. Binds to muscle nicotinic acetylcholine receptor (nAChR) and inhibit acetylcholine from binding to the receptor, thereby impairing neuromuscular transmission. The sequence is that of Short neurotoxin II from Laticauda colubrina (Yellow-lipped sea krait).